The chain runs to 545 residues: Glucose-6-phosphate isomerase (545 aa).

Glu-351 acts as the Proton donor in catalysis. Residues His-382 and Lys-510 contribute to the active site.

This sequence belongs to the GPI family.

Its subcellular location is the cytoplasm. It catalyses the reaction alpha-D-glucose 6-phosphate = beta-D-fructose 6-phosphate. It functions in the pathway carbohydrate biosynthesis; gluconeogenesis. Its pathway is carbohydrate degradation; glycolysis; D-glyceraldehyde 3-phosphate and glycerone phosphate from D-glucose: step 2/4. Its function is as follows. Catalyzes the reversible isomerization of glucose-6-phosphate to fructose-6-phosphate. The chain is Glucose-6-phosphate isomerase from Helicobacter pylori (strain P12).